Consider the following 190-residue polypeptide: UPF0340 protein BT9727_4999 (190 aa).

The protein belongs to the UPF0340 family.

The sequence is that of UPF0340 protein BT9727_4999 from Bacillus thuringiensis subsp. konkukian (strain 97-27).